We begin with the raw amino-acid sequence, 362 residues long: mRNA decay activator protein ZFP36L2 (362 aa).

Residues Ser-100–Gln-109 show a composition bias toward basic and acidic residues. Residues Ser-100–Val-126 form a disordered region. Residues Leu-111 to Gln-120 show a composition bias toward low complexity. The RNA-binding motif lies at Arg-130–Leu-135. 2 C3H1-type zinc fingers span residues Arg-130 to His-158 and Lys-168 to Glu-196. The segment at Tyr-147–Arg-188 is RNA-binding. 2 disordered regions span residues Asp-225 to Ser-244 and Ser-306 to Asp-362. The segment covering Tyr-327 to Asp-346 has biased composition (low complexity).

Phosphorylated.

It is found in the nucleus. Its subcellular location is the cytoplasm. In terms of biological role, zinc-finger RNA-binding protein that destabilizes several cytoplasmic AU-rich element (ARE)-containing mRNA transcripts by promoting their poly(A) tail removal or deadenylation, and hence provide a mechanism for attenuating protein synthesis. Acts as a 3'-untranslated region (UTR) ARE mRNA-binding adapter protein to communicate signaling events to the mRNA decay machinery. Functions by recruiting the CCR4-NOT deadenylase complex and probably other components of the cytoplasmic RNA decay machinery to the bound ARE-containing mRNAs, and hence promotes ARE-mediated mRNA deadenylation and decay processes. Binds to 3'-UTR ARE of numerous mRNAs. Also induces the degradation of ARE-containing mRNAs even in absence of poly(A) tail. Required for tubulogenesis during pronephros development. The chain is mRNA decay activator protein ZFP36L2 (zfp36l2) from Xenopus tropicalis (Western clawed frog).